The primary structure comprises 252 residues: Protein GrpE (252 aa).

Over residues 1–22 (MHNPQSRGHNLSQAMSDQTVTN) the composition is skewed to polar residues. The tract at residues 1-70 (MHNPQSRGHN…EEDQASEATS (70 aa)) is disordered.

This sequence belongs to the GrpE family. As to quaternary structure, homodimer.

It is found in the cytoplasm. Functionally, participates actively in the response to hyperosmotic and heat shock by preventing the aggregation of stress-denatured proteins, in association with DnaK and GrpE. It is the nucleotide exchange factor for DnaK and may function as a thermosensor. Unfolded proteins bind initially to DnaJ; upon interaction with the DnaJ-bound protein, DnaK hydrolyzes its bound ATP, resulting in the formation of a stable complex. GrpE releases ADP from DnaK; ATP binding to DnaK triggers the release of the substrate protein, thus completing the reaction cycle. Several rounds of ATP-dependent interactions between DnaJ, DnaK and GrpE are required for fully efficient folding. The sequence is that of Protein GrpE from Thermosynechococcus vestitus (strain NIES-2133 / IAM M-273 / BP-1).